Here is a 629-residue protein sequence, read N- to C-terminus: tRNA uridine 5-carboxymethylaminomethyl modification enzyme MnmG (629 aa).

FAD is bound at residue 13–18 (GGGHAG). Residue 273–287 (GPRYCPSIEDKVNRF) coordinates NAD(+).

Belongs to the MnmG family. As to quaternary structure, homodimer. Heterotetramer of two MnmE and two MnmG subunits. It depends on FAD as a cofactor.

It localises to the cytoplasm. In terms of biological role, NAD-binding protein involved in the addition of a carboxymethylaminomethyl (cmnm) group at the wobble position (U34) of certain tRNAs, forming tRNA-cmnm(5)s(2)U34. This is tRNA uridine 5-carboxymethylaminomethyl modification enzyme MnmG from Shewanella pealeana (strain ATCC 700345 / ANG-SQ1).